A 364-amino-acid chain; its full sequence is Aminomethyltransferase (364 aa).

The protein belongs to the GcvT family. The glycine cleavage system is composed of four proteins: P, T, L and H.

The catalysed reaction is N(6)-[(R)-S(8)-aminomethyldihydrolipoyl]-L-lysyl-[protein] + (6S)-5,6,7,8-tetrahydrofolate = N(6)-[(R)-dihydrolipoyl]-L-lysyl-[protein] + (6R)-5,10-methylene-5,6,7,8-tetrahydrofolate + NH4(+). Functionally, the glycine cleavage system catalyzes the degradation of glycine. The protein is Aminomethyltransferase of Shewanella woodyi (strain ATCC 51908 / MS32).